The chain runs to 310 residues: Putative S-adenosyl-L-methionine-dependent methyltransferase Franean1_4929 (310 aa).

Positions 1–28 are disordered; the sequence is MSRPSAPRGRTELRSIHERGHERGSAGV. The span at 9 to 24 shows a compositional bias: basic and acidic residues; sequence GRTELRSIHERGHERG. Residues D136 and 165 to 166 each bind S-adenosyl-L-methionine; that span reads DL.

This sequence belongs to the UPF0677 family.

In terms of biological role, exhibits S-adenosyl-L-methionine-dependent methyltransferase activity. The sequence is that of Putative S-adenosyl-L-methionine-dependent methyltransferase Franean1_4929 from Parafrankia sp. (strain EAN1pec).